The primary structure comprises 264 residues: Thymidylate synthase (264 aa).

A dUMP-binding site is contributed by Arg-21. (6R)-5,10-methylene-5,6,7,8-tetrahydrofolate is bound at residue His-51. DUMP is bound at residue 126–127 (RR). The active-site Nucleophile is Cys-146. DUMP-binding positions include 166-169 (RSAD), Asn-177, and 207-209 (HLY). Residue Asp-169 coordinates (6R)-5,10-methylene-5,6,7,8-tetrahydrofolate. Ala-263 is a (6R)-5,10-methylene-5,6,7,8-tetrahydrofolate binding site.

It belongs to the thymidylate synthase family. Bacterial-type ThyA subfamily. Homodimer.

Its subcellular location is the cytoplasm. It catalyses the reaction dUMP + (6R)-5,10-methylene-5,6,7,8-tetrahydrofolate = 7,8-dihydrofolate + dTMP. The protein operates within pyrimidine metabolism; dTTP biosynthesis. Functionally, catalyzes the reductive methylation of 2'-deoxyuridine-5'-monophosphate (dUMP) to 2'-deoxythymidine-5'-monophosphate (dTMP) while utilizing 5,10-methylenetetrahydrofolate (mTHF) as the methyl donor and reductant in the reaction, yielding dihydrofolate (DHF) as a by-product. This enzymatic reaction provides an intracellular de novo source of dTMP, an essential precursor for DNA biosynthesis. In Polynucleobacter asymbioticus (strain DSM 18221 / CIP 109841 / QLW-P1DMWA-1) (Polynucleobacter necessarius subsp. asymbioticus), this protein is Thymidylate synthase.